The primary structure comprises 190 residues: Cytidylate kinase (190 aa).

7-15 is a binding site for ATP; it reads GKIGSGKST.

This sequence belongs to the cytidylate kinase family. Type 2 subfamily.

It is found in the cytoplasm. It catalyses the reaction CMP + ATP = CDP + ADP. The catalysed reaction is dCMP + ATP = dCDP + ADP. The sequence is that of Cytidylate kinase from Thermoplasma volcanium (strain ATCC 51530 / DSM 4299 / JCM 9571 / NBRC 15438 / GSS1).